Reading from the N-terminus, the 198-residue chain is Na(+)-translocating NADH-quinone reductase subunit E (198 aa).

6 helical membrane passes run 11-31, 35-55, 77-97, 110-130, 140-160, and 176-196; these read SVFI…FLAV, VSTA…SVPV, FLNF…LEMF, GIFL…SFMV, VVYG…LAGL, and LGIT…FSGI.

Belongs to the NqrDE/RnfAE family. As to quaternary structure, composed of six subunits; NqrA, NqrB, NqrC, NqrD, NqrE and NqrF.

It is found in the cell inner membrane. It carries out the reaction a ubiquinone + n Na(+)(in) + NADH + H(+) = a ubiquinol + n Na(+)(out) + NAD(+). NQR complex catalyzes the reduction of ubiquinone-1 to ubiquinol by two successive reactions, coupled with the transport of Na(+) ions from the cytoplasm to the periplasm. NqrA to NqrE are probably involved in the second step, the conversion of ubisemiquinone to ubiquinol. In Mannheimia succiniciproducens (strain KCTC 0769BP / MBEL55E), this protein is Na(+)-translocating NADH-quinone reductase subunit E.